Here is a 239-residue protein sequence, read N- to C-terminus: Nicotinamide riboside transporter PnuC (239 aa).

Topologically, residues 1–21 (MDFFSVQNILVHIPIGAGGYD) are cytoplasmic. Residues 22–42 (LSWIEAVGTIAGLLCIGLASL) form a helical membrane-spanning segment. Over 43–48 (EKISNY) the chain is Periplasmic. The helical transmembrane segment at 49-68 (FFGLINVTLFGIIFFQIQLY) threads the bilayer. Residues 69 to 71 (ASL) are Cytoplasmic-facing. Residues 72–89 (LLQVFFFAANIYGWYAWS) traverse the membrane as a helical segment. At 90–109 (RQTSQNEAELKIRWLPLPKA) the chain is on the periplasmic side. The chain crosses the membrane as a helical span at residues 110 to 127 (LSWLAVCVVSIGLMTVFI). Topologically, residues 128 to 157 (NPVFAFLTRVAVMIMQALGLQVVMPELQPD) are cytoplasmic. Residues 158-177 (AFPFWDSCMMVLSIVAMILM) form a helical membrane-spanning segment. The Periplasmic portion of the chain corresponds to 178–183 (TRKYVE). Residues 184 to 206 (NWLLWVIINVISVVIFALQGVYA) traverse the membrane as a helical segment. Beta-nicotinamide D-riboside contacts are provided by Trp-188 and Asn-192. Topologically, residues 207–239 (MSLEYIILTFIALNGSRMWINSARERGSRALSH) are cytoplasmic.

Belongs to the nicotinamide ribonucleoside (NR) uptake permease (TC 4.B.1) family.

Its subcellular location is the cell inner membrane. Required for nicotinamide riboside transport across the inner membrane. In Escherichia coli (strain K12), this protein is Nicotinamide riboside transporter PnuC (pnuC).